Here is a 341-residue protein sequence, read N- to C-terminus: MTPIRTNWSRDEIAALFEQPFTELLFQAATVHRAYHPPEQVQLCTLLSIKTGGCPEDCGYCSQSVKADSGVEATKLMDVQRVLQSAAQAKDAGSQRFCMGAAWRNPKDRDMPAIVEIVKGVRDMGLETCMTLGMLTPKQADMLKDAGLDYYNHNVDTGPEYYERVISTRNYQDRLDTLQNVRDAGINVCSGGIVGMGETREDRVGFVHTLATLERHPESVPVNALVPVKGTVLGDMLADTPLAKIDDIEFVRTVAVARITMPLSMVRLSAGRESMSEATQALCFMAGANSIFTGDKLLTAANAGDDKDAALFDKLGLTALQGEEPLRRAKDEAGKAAIPAE.

The Radical SAM core domain maps to 39–263 (EQVQLCTLLS…VAVARITMPL (225 aa)). Residues cysteine 54, cysteine 58, and cysteine 61 each contribute to the [4Fe-4S] cluster site. [2Fe-2S] cluster is bound by residues cysteine 98, cysteine 129, cysteine 189, and arginine 267.

This sequence belongs to the radical SAM superfamily. Biotin synthase family. Homodimer. [4Fe-4S] cluster is required as a cofactor. The cofactor is [2Fe-2S] cluster.

The catalysed reaction is (4R,5S)-dethiobiotin + (sulfur carrier)-SH + 2 reduced [2Fe-2S]-[ferredoxin] + 2 S-adenosyl-L-methionine = (sulfur carrier)-H + biotin + 2 5'-deoxyadenosine + 2 L-methionine + 2 oxidized [2Fe-2S]-[ferredoxin]. The protein operates within cofactor biosynthesis; biotin biosynthesis; biotin from 7,8-diaminononanoate: step 2/2. Functionally, catalyzes the conversion of dethiobiotin (DTB) to biotin by the insertion of a sulfur atom into dethiobiotin via a radical-based mechanism. This is Biotin synthase from Erythrobacter litoralis (strain HTCC2594).